Here is a 599-residue protein sequence, read N- to C-terminus: Glycerophosphodiester phosphodiesterase domain-containing protein 5 (599 aa).

The Cytoplasmic segment spans residues 1-42 (MVKHQPLQYYEPQLCLSCLTGIYGCRWKRYQRSHDDTTKWER). 2 cysteine pairs are disulfide-bonded: C15/C18 and C25/C576. The helical transmembrane segment at 43-63 (LWFLILTSSFFLTLVWFYFWW) threads the bilayer. The Extracellular segment spans residues 64–87 (EVHNDYNEINWFLYNRMGYWSDWS). The helical transmembrane segment at 88–108 (IPILVTTAAGFTYITVLLILA) threads the bilayer. Over 109–125 (LCHIAVGQQMNLHWLHK) the chain is Cytoplasmic. Residues 126 to 146 (IGLMTTLITTVVTMSSIAQLW) form a helical membrane-spanning segment. The Extracellular portion of the chain corresponds to 147-160 (DDEWEMVFISLQAT). Residues 161–181 (APFLHIGALAAVTALSWLIAG) form a helical membrane-spanning segment. Topologically, residues 182 to 192 (QFARMEKATSQ) are cytoplasmic. A helical membrane pass occupies residues 193 to 213 (MLMVTAYLAVVVALYLVPLTI). At 214-497 (SSPCIMEKKA…IWLMPPDEYR (284 aa)) the chain is on the extracellular side. One can recognise a GP-PDE domain in the interval 228–485 (PAIIGHRGAP…DSSHVLRKVP (258 aa)). Residues N301, N336, N352, N374, and N448 are each glycosylated (N-linked (GlcNAc...) asparagine). A helical membrane pass occupies residues 498–518 (LIWITSDLISFIIIVGVFIFQ). Topologically, residues 519-599 (NYHNDQWRLG…DHRDTRLRMN (81 aa)) are cytoplasmic.

It belongs to the glycerophosphoryl diester phosphodiesterase family. As to quaternary structure, interacts with PRDX1; forms a mixed-disulfide with PRDX1, leading to disrupt intramolecular disulfide bond between Cys-25 and Cys-576. Post-translationally, intramolecular disulfide bond between Cys-25 and Cys-576 is reduced by PRDX1. As to expression, detected in mature motor neurons.

The protein resides in the endomembrane system. It localises to the cytoplasm. Its subcellular location is the perinuclear region. The protein localises to the cell projection. It is found in the growth cone. The catalysed reaction is a 1,2-diacyl-sn-glycero-3-phospho-(1D-myo-inositol-4,5-bisphosphate) + H2O = 1D-myo-inositol 1,4,5-trisphosphate + a 1,2-diacyl-sn-glycerol + H(+). It carries out the reaction sn-glycerol 3-phosphocholine + H2O = sn-glycerol 3-phosphate + choline + H(+). With respect to regulation, activated by PRDX1 by reduction of an intramolecular disulfide bond. Glycerophosphodiester phosphodiesterase that promotes cell cycle exit and drives spinal motor neuron differentiation. Mediates the cleavage of glycosylphosphatidylinositol (GPI) anchor of target proteins: removes the GPI-anchor of RECK, leading to release RECK from the plasma membrane. May contribute to the osmotic regulation of cellular glycerophosphocholine. This chain is Glycerophosphodiester phosphodiesterase domain-containing protein 5 (GDPD5), found in Gallus gallus (Chicken).